The following is a 226-amino-acid chain: NADH-ubiquinone oxidoreductase chain 6 (226 aa).

The next 5 helical transmembrane spans lie at 2–22, 28–48, 56–76, 90–110, and 169–189; these read STLGLLLILLGIIITCTFVIL, IYSILNLIVIYGCYASILLTV, IYILVNVGAIAVLFLFIVMMI, YNIYMFVGFIGLIGIMGILIT, and IWFIMACIILLIGMVGVIYIT.

This sequence belongs to the complex I subunit 6 family.

The protein localises to the mitochondrion membrane. The catalysed reaction is a ubiquinone + NADH + 5 H(+)(in) = a ubiquinol + NAD(+) + 4 H(+)(out). Its function is as follows. Core subunit of the mitochondrial membrane respiratory chain NADH dehydrogenase (Complex I) that is believed to belong to the minimal assembly required for catalysis. Complex I functions in the transfer of electrons from NADH to the respiratory chain. The immediate electron acceptor for the enzyme is believed to be ubiquinone. This is NADH-ubiquinone oxidoreductase chain 6 (nad6) from Dictyostelium citrinum (Slime mold).